A 334-amino-acid chain; its full sequence is Holliday junction branch migration complex subunit RuvB (334 aa).

The tract at residues 4–184 (ADRLISAEPI…FGIVQRLEFY (181 aa)) is large ATPase domain (RuvB-L). Residues I23, R24, G65, K68, T69, T70, 131 to 133 (EDY), R174, Y184, and R221 each bind ATP. T69 contacts Mg(2+). A small ATPAse domain (RuvB-S) region spans residues 185–255 (QVADLQHIVS…VAMQALDMLN (71 aa)). Residues 258 to 334 (AEGFDYMDRK…YKHFGMVREE (77 aa)) are head domain (RuvB-H). The DNA site is built by R294, R313, and R318.

The protein belongs to the RuvB family. In terms of assembly, homohexamer. Forms an RuvA(8)-RuvB(12)-Holliday junction (HJ) complex. HJ DNA is sandwiched between 2 RuvA tetramers; dsDNA enters through RuvA and exits via RuvB. An RuvB hexamer assembles on each DNA strand where it exits the tetramer. Each RuvB hexamer is contacted by two RuvA subunits (via domain III) on 2 adjacent RuvB subunits; this complex drives branch migration. In the full resolvosome a probable DNA-RuvA(4)-RuvB(12)-RuvC(2) complex forms which resolves the HJ.

It is found in the cytoplasm. The catalysed reaction is ATP + H2O = ADP + phosphate + H(+). In terms of biological role, the RuvA-RuvB-RuvC complex processes Holliday junction (HJ) DNA during genetic recombination and DNA repair, while the RuvA-RuvB complex plays an important role in the rescue of blocked DNA replication forks via replication fork reversal (RFR). RuvA specifically binds to HJ cruciform DNA, conferring on it an open structure. The RuvB hexamer acts as an ATP-dependent pump, pulling dsDNA into and through the RuvAB complex. RuvB forms 2 homohexamers on either side of HJ DNA bound by 1 or 2 RuvA tetramers; 4 subunits per hexamer contact DNA at a time. Coordinated motions by a converter formed by DNA-disengaged RuvB subunits stimulates ATP hydrolysis and nucleotide exchange. Immobilization of the converter enables RuvB to convert the ATP-contained energy into a lever motion, pulling 2 nucleotides of DNA out of the RuvA tetramer per ATP hydrolyzed, thus driving DNA branch migration. The RuvB motors rotate together with the DNA substrate, which together with the progressing nucleotide cycle form the mechanistic basis for DNA recombination by continuous HJ branch migration. Branch migration allows RuvC to scan DNA until it finds its consensus sequence, where it cleaves and resolves cruciform DNA. This Serratia proteamaculans (strain 568) protein is Holliday junction branch migration complex subunit RuvB.